A 137-amino-acid polypeptide reads, in one-letter code: Large ribosomal subunit protein uL16c (137 aa).

This sequence belongs to the universal ribosomal protein uL16 family. Part of the 50S ribosomal subunit.

It localises to the plastid. Its subcellular location is the chloroplast. This chain is Large ribosomal subunit protein uL16c, found in Vigna unguiculata (Cowpea).